The primary structure comprises 293 residues: Heterogeneous nuclear ribonucleoprotein C-like 1 (293 aa).

In terms of domain architecture, RRM spans 16-87 (SRVFIGNLNT…QVVDINLAAE (72 aa)). Disordered regions lie at residues 137–177 (ALAV…KLKG) and 206–293 (KEQS…QDDS). The stretch at 177–225 (GDDLQAIKQELTQIKQKVDSLLENLEKIEKEQSKQEVEVKNAKSEEEQS) forms a coiled coil. 2 stretches are compositionally biased toward basic and acidic residues: residues 206 to 222 (KEQS…KSEE) and 229 to 240 (MKKDETHVKMES). Composition is skewed to acidic residues over residues 242 to 267 (GGAE…DDQL) and 275 to 284 (KEAEEGEDDR).

This sequence belongs to the RRM HNRPC family. RALY subfamily.

Its subcellular location is the nucleus. Its function is as follows. May play a role in nucleosome assembly by neutralizing basic proteins such as A and B core hnRNPs. In Homo sapiens (Human), this protein is Heterogeneous nuclear ribonucleoprotein C-like 1 (HNRNPCL1).